We begin with the raw amino-acid sequence, 164 residues long: Hoefavidin (164 aa).

A signal peptide spans M1–A22. In terms of domain architecture, Avidin-like spans K32–A155. Positions 42, 46, 68, 70, and 76 each coordinate biotin. A disulfide bridge connects residues C77 and C108. 3 residues coordinate biotin: S110, T112, and D148.

Belongs to the avidin/streptavidin family. As to quaternary structure, exhibits a dynamic oligomeric assembly: the apo form exits as homooctamers, which dissociate into homodimers upon biotin binding. The X-ray structure of the intact hoefavidin reveals unique crystal packing generated by an octameric cylindrical structure wherein the C-terminal segments of each monomer are introduced into the entrance of the biotin-binding site of an adjacent non-canonical monomer.

It is found in the secreted. Its function is as follows. The exact role played by hoefavidin in the host organism is still obscure. Forms a strong non-covalent complex with biotin and 2-iminobiotin. The chain is Hoefavidin from Hoeflea phototrophica (strain DSM 17068 / NCIMB 14078 / DFL-43).